Consider the following 307-residue polypeptide: Phosphonates import ATP-binding protein PhnC (307 aa).

One can recognise an ABC transporter domain in the interval 4–252; that stretch reads IRIERLSKTF…RLHALYGDDA (249 aa). 37-44 serves as a coordination point for ATP; that stretch reads GASGSGKS. The span at 265-275 shows a compositional bias: basic and acidic residues; it reads AAREAAGEPAR. A disordered region spans residues 265–307; it reads AAREAAGEPARRAPAAFDSAGSPDLPDSQPASPRRMLAASSMR.

It belongs to the ABC transporter superfamily. Phosphonates importer (TC 3.A.1.9.1) family. As to quaternary structure, the complex is composed of two ATP-binding proteins (PhnC), two transmembrane proteins (PhnE) and a solute-binding protein (PhnD).

The protein resides in the cell inner membrane. It catalyses the reaction phosphonate(out) + ATP + H2O = phosphonate(in) + ADP + phosphate + H(+). Its function is as follows. Part of the ABC transporter complex PhnCDE involved in phosphonates import. Responsible for energy coupling to the transport system. This is Phosphonates import ATP-binding protein PhnC from Burkholderia pseudomallei (strain 1710b).